The chain runs to 272 residues: 3-methyl-2-oxobutanoate hydroxymethyltransferase (272 aa).

Positions 51 and 90 each coordinate Mg(2+). Residues 51–52 (DS), Asp90, and Lys120 each bind 3-methyl-2-oxobutanoate. Glu122 lines the Mg(2+) pocket. Glu189 serves as the catalytic Proton acceptor.

This sequence belongs to the PanB family. As to quaternary structure, homodecamer; pentamer of dimers. It depends on Mg(2+) as a cofactor.

It is found in the cytoplasm. It catalyses the reaction 3-methyl-2-oxobutanoate + (6R)-5,10-methylene-5,6,7,8-tetrahydrofolate + H2O = 2-dehydropantoate + (6S)-5,6,7,8-tetrahydrofolate. It functions in the pathway cofactor biosynthesis; (R)-pantothenate biosynthesis; (R)-pantoate from 3-methyl-2-oxobutanoate: step 1/2. Functionally, catalyzes the reversible reaction in which hydroxymethyl group from 5,10-methylenetetrahydrofolate is transferred onto alpha-ketoisovalerate to form ketopantoate. The polypeptide is 3-methyl-2-oxobutanoate hydroxymethyltransferase (Syntrophus aciditrophicus (strain SB)).